The sequence spans 438 residues: Vasoactive intestinal polypeptide receptor 2 (438 aa).

The signal sequence occupies residues 1-23 (MRTLLPPALLTCWLLAPVNSIHP). At 24–124 (ECRFHLEIQE…EDESKITFYI (101 aa)) the chain is on the extracellular side. Cystine bridges form between Cys-38/Cys-61, Cys-52/Cys-93, and Cys-75/Cys-109. N-linked (GlcNAc...) asparagine glycosylation is found at Asn-58, Asn-88, and Asn-92. Residues 125-150 (LVKAIYTLGYSVSLMSLATGSIILCL) form a helical membrane-spanning segment. The Cytoplasmic segment spans residues 151–158 (FRKLHCTR). A helical membrane pass occupies residues 159-180 (NYIHLNLFLSFILRAISVLVKD). The Extracellular portion of the chain corresponds to 181–203 (DVLYSSSGTLHCPDQPSSWVGCK). Residues Cys-202 and Cys-271 are joined by a disulfide bond. Residues 204–228 (LSLVFLQYCIMANFFWLLVEGLYLH) traverse the membrane as a helical segment. At 229-239 (TLLVAMLPPRR) the chain is on the cytoplasmic side. A helical membrane pass occupies residues 240–261 (CFLAYLLIGWGLPTVCIGAWTA). Residues 262 to 280 (ARLYLEDTGCWDTNDHSVP) are Extracellular-facing. Residues 281–304 (WWVIRIPILISIIVNFVLFISIIR) traverse the membrane as a helical segment. The Cytoplasmic portion of the chain corresponds to 305-325 (ILLQKLTSPDVGGNDQSQYKR). A helical transmembrane segment spans residues 326–346 (LAKSTLLLIPLFGVHYMVFAV). The Extracellular portion of the chain corresponds to 347-354 (FPISISSK). Residues 355–378 (YQILFELCLGSFQGLVVAVLYCFL) traverse the membrane as a helical segment. The Cytoplasmic segment spans residues 379–438 (NSEVQCELKRKWRSRCPTPSASRDYRVCGSSFSRNGSEGALQFHRGSRAQSFLQTETSVI).

This sequence belongs to the G-protein coupled receptor 2 family. Interacts with ADCYAP1/PACAP (via N-terminal extracellular domain); activated by PACAP27 and CAPAC38 neuropeptides. Interacts with VIP; the interaction results in VIPR1 activation. As to expression, expressed in CD4+ T-cells, but not in CD8+ T-cells. Expressed in the T-cell lines Jurkat, Peer, MOLT-4, HSB, YT and SUP-T1, but not in the T-cell lines HARRIS and HuT 78.

Its subcellular location is the cell membrane. Functionally, g protein-coupled receptor activated by the neuropeptides vasoactive intestinal peptide (VIP) and pituitary adenylate cyclase-activating polypeptide (ADCYAP1/PACAP). Binds VIP and both PACAP27 and PACAP38 bioactive peptides with the following order of potency PACAP38 = VIP &gt; PACAP27. Ligand binding causes a conformation change that triggers signaling via guanine nucleotide-binding proteins (G proteins) and modulates the activity of downstream effectors. Activates cAMP-dependent pathway. May be coupled to phospholipase C. The protein is Vasoactive intestinal polypeptide receptor 2 of Homo sapiens (Human).